Consider the following 283-residue polypeptide: Orotidine 5'-phosphate decarboxylase (283 aa).

Substrate-binding positions include D40, K62–H64, D93–T102, Y220, and R239. Residue K95 is the Proton donor of the active site.

This sequence belongs to the OMP decarboxylase family.

It carries out the reaction orotidine 5'-phosphate + H(+) = UMP + CO2. Its pathway is pyrimidine metabolism; UMP biosynthesis via de novo pathway; UMP from orotate: step 2/2. In Mycosarcoma maydis (Corn smut fungus), this protein is Orotidine 5'-phosphate decarboxylase (PYR6).